Here is a 101-residue protein sequence, read N- to C-terminus: Small ribosomal subunit protein bS18c (101 aa).

Belongs to the bacterial ribosomal protein bS18 family. Part of the 30S ribosomal subunit.

The protein localises to the plastid. It is found in the chloroplast. The chain is Small ribosomal subunit protein bS18c from Populus alba (White poplar).